Consider the following 295-residue polypeptide: F-box only protein 6 (295 aa).

The 48-residue stretch at 1–48 (MVHINELPENILLELFIHIPAPQLLRNCRLVCRLWRDLIDVVSLWKRK) folds into the F-box domain. Positions 69 to 250 (FYILCSLQRN…VTNSSIIISH (182 aa)) constitute an FBA domain. Phosphoserine occurs at positions 249 and 276. Position 280 is a phosphothreonine (Thr-280).

As to quaternary structure, interacts with CHEK1 and CUL1. Part of a SCF (SKP1-cullin-F-box) protein ligase complex. Interacts with VCP. As to expression, present in liver and kidney (at protein level). Widely expressed.

It localises to the cytoplasm. It participates in protein modification; protein ubiquitination. In terms of biological role, substrate-recognition component of some SCF (SKP1-CUL1-F-box protein)-type E3 ubiquitin ligase complexes. Involved in DNA damage response by specifically recognizing activated CHEK1 (phosphorylated on 'Ser-345'), promoting its ubiquitination and degradation. Ubiquitination of CHEK1 is required to ensure that activated CHEK1 does not accumulate as cells progress through S phase, or when replication forks encounter transient impediments during normal DNA replication. Involved in endoplasmic reticulum-associated degradation pathway (ERAD) for misfolded lumenal proteins by recognizing and binding sugar chains on unfolded glycoproteins that are retrotranslocated into the cytosol and promoting their ubiquitination and subsequent degradation. Able to recognize and bind denatured glycoproteins, which are modified with not only high-mannose but also complex-type oligosaccharides. Also recognizes sulfated glycans. This is F-box only protein 6 (Fbxo6) from Mus musculus (Mouse).